We begin with the raw amino-acid sequence, 35 residues long: uncharacterized protein (35 aa).

This is an uncharacterized protein from Archaeoglobus fulgidus (strain ATCC 49558 / DSM 4304 / JCM 9628 / NBRC 100126 / VC-16).